Consider the following 232-residue polypeptide: Protein shisa-3 (232 aa).

The first 19 residues, 1–19 (MRLLGCFFLIFLTWGSARA), serve as a signal peptide directing secretion. Topologically, residues 20 to 93 (QGEYCHGWLD…GVSAQPVYVP (74 aa)) are lumenal. Residues 94–114 (FLIVGSIFIAFIIVGSLVAVY) traverse the membrane as a helical segment. Topologically, residues 115–232 (CCTCLRPKQT…NKSCPDFRQS (118 aa)) are cytoplasmic. The interval 146 to 185 (TSGNLRTPSRQSSTATSSTSTGGSVRRLSSSRADPGYLVS) is disordered. Over residues 151-177 (RTPSRQSSTATSSTSTGGSVRRLSSSR) the composition is skewed to low complexity.

This sequence belongs to the shisa family. In terms of assembly, interacts with fzd8 and fgfr1.

The protein localises to the endoplasmic reticulum membrane. Plays an essential role in the maturation of presomitic mesoderm cells by individual attenuation of both fgf and wnt signaling. Regulates head and somite developmen. Inhibits both wnt and fgf signaling through the regulation of protein maturation and cell surface transportation of their receptors within the endoplasmic reticulum. The sequence is that of Protein shisa-3 (shisa3) from Xenopus laevis (African clawed frog).